The chain runs to 339 residues: Biotin synthase (339 aa).

In terms of domain architecture, Radical SAM core spans 55-282 (NAVQLSTLLS…KAVVRLSAGR (228 aa)). C70, C74, and C77 together coordinate [4Fe-4S] cluster. [2Fe-2S] cluster is bound by residues C114, C145, C205, and R277.

This sequence belongs to the radical SAM superfamily. Biotin synthase family. Homodimer. [4Fe-4S] cluster serves as cofactor. Requires [2Fe-2S] cluster as cofactor.

It carries out the reaction (4R,5S)-dethiobiotin + (sulfur carrier)-SH + 2 reduced [2Fe-2S]-[ferredoxin] + 2 S-adenosyl-L-methionine = (sulfur carrier)-H + biotin + 2 5'-deoxyadenosine + 2 L-methionine + 2 oxidized [2Fe-2S]-[ferredoxin]. Its pathway is cofactor biosynthesis; biotin biosynthesis; biotin from 7,8-diaminononanoate: step 2/2. In terms of biological role, catalyzes the conversion of dethiobiotin (DTB) to biotin by the insertion of a sulfur atom into dethiobiotin via a radical-based mechanism. The polypeptide is Biotin synthase (Burkholderia ambifaria (strain MC40-6)).